The following is a 201-amino-acid chain: Protein FAR-RED-ELONGATED HYPOCOTYL 1-LIKE (201 aa).

The short motif at 32–35 is the Nuclear localization sequence (NLS) element; it reads KKRK. A Nuclear export sequence (NES) motif is present at residues 43–46; it reads LLPL.

Belongs to the FHY1 protein family. As to quaternary structure, homodimer and heterodimer with FHY1. Interacts with PHYA, especially upon far-red (FR) light illumination. Binds to LAF1 and HFR1. Inactivated by rapid reversible PHYA-mediated phosphorylation.

The protein resides in the nucleus. The protein localises to the cytoplasm. Its function is as follows. Can activate transcription. Essential for light-regulated PHYA nuclear accumulation and subsequent PHYA phototropic signaling processes. PHYA-specific signal transducer in response to continuous FR lights. Mediates the association of PHYA with HFR1 and LAF1 in the nucleus in response to FR conditions. Contributes to inhibition of hypocotyl elongation in continuous blue light (B). The protein is Protein FAR-RED-ELONGATED HYPOCOTYL 1-LIKE of Arabidopsis thaliana (Mouse-ear cress).